The following is a 145-amino-acid chain: D-aminoacyl-tRNA deacylase (145 aa).

The Gly-cisPro motif, important for rejection of L-amino acids signature appears at 137-138; sequence GP.

The protein belongs to the DTD family. Homodimer.

The protein resides in the cytoplasm. It catalyses the reaction glycyl-tRNA(Ala) + H2O = tRNA(Ala) + glycine + H(+). The enzyme catalyses a D-aminoacyl-tRNA + H2O = a tRNA + a D-alpha-amino acid + H(+). In terms of biological role, an aminoacyl-tRNA editing enzyme that deacylates mischarged D-aminoacyl-tRNAs. Also deacylates mischarged glycyl-tRNA(Ala), protecting cells against glycine mischarging by AlaRS. Acts via tRNA-based rather than protein-based catalysis; rejects L-amino acids rather than detecting D-amino acids in the active site. By recycling D-aminoacyl-tRNA to D-amino acids and free tRNA molecules, this enzyme counteracts the toxicity associated with the formation of D-aminoacyl-tRNA entities in vivo and helps enforce protein L-homochirality. The polypeptide is D-aminoacyl-tRNA deacylase (Shewanella frigidimarina (strain NCIMB 400)).